The chain runs to 347 residues: MGTRGPYALVDTTPAKTILVYRNGDQFYVGRKFVFSRRRVANFEALLEQLTEQVEVPFGVRRLYTPTRGHPVLGLDALQTGGKYVAAGRERFKKLDYIHIVPRKPSKMRKLKEIKPVVHCDIKVPSRWQIQSRTSRYINVFTNGRLFIPPIKVIIPKFSLSDWNSVLAMIGEKVFPLGGVRKLFTMDGHLLDDSKNLQDNYFYVAAGLETFKSIPYWKSSWVPSEVQQRFGGNDKYTQTKKRVESKVKEPLQNDSVPPRSQDSVYYAKEKKQMDTELLVQSGAEGDVYKAQTPAKEAQEALEVKEDPEVKVEVPVDQAPAEIVKEIDEIGDSSPGLKSGMHIPASFM.

Doublecortin domains are found at residues K16 to I98 and R136 to W217. The segment at K235–S260 is disordered. Over residues K241–L251 the composition is skewed to basic and acidic residues.

It localises to the cell projection. The protein resides in the cilium. The protein localises to the flagellum. Its subcellular location is the cytoplasm. The polypeptide is Doublecortin domain-containing protein 2C (Mus musculus (Mouse)).